Here is a 100-residue protein sequence, read N- to C-terminus: uncharacterized protein (100 aa).

This is an uncharacterized protein from Bacillus anthracis.